A 752-amino-acid chain; its full sequence is Multifunctional tryptophan biosynthesis protein (752 aa).

The region spanning 3 to 202 (FTLLIDNYDS…IQMKGGKWGG (200 aa)) is the Glutamine amidotransferase type-1 domain. 58 to 60 (GPG) lines the L-glutamine pocket. Residue cysteine 86 is the Nucleophile; for GATase activity of the active site. 136–137 (SL) is an L-glutamine binding site. Active-site for GATase activity residues include histidine 176 and glutamate 178. The tract at residues 231–495 (ILNRIHAQRL…DTKAFLRSLI (265 aa)) is indole-3-glycerol phosphate synthase. Positions 509–752 (LVKICGIRST…VEAFVKAVRG (244 aa)) are N-(5'-phosphoribosyl)anthranilate isomerase.

The enzyme catalyses N-(5-phospho-beta-D-ribosyl)anthranilate = 1-(2-carboxyphenylamino)-1-deoxy-D-ribulose 5-phosphate. It catalyses the reaction 1-(2-carboxyphenylamino)-1-deoxy-D-ribulose 5-phosphate + H(+) = (1S,2R)-1-C-(indol-3-yl)glycerol 3-phosphate + CO2 + H2O. The catalysed reaction is chorismate + L-glutamine = anthranilate + pyruvate + L-glutamate + H(+). The protein operates within amino-acid biosynthesis; L-tryptophan biosynthesis; L-tryptophan from chorismate: step 1/5. It participates in amino-acid biosynthesis; L-tryptophan biosynthesis; L-tryptophan from chorismate: step 3/5. It functions in the pathway amino-acid biosynthesis; L-tryptophan biosynthesis; L-tryptophan from chorismate: step 4/5. Trifunctional enzyme bearing the Gln amidotransferase (GATase) domain of anthranilate synthase, indole-glycerolphosphate synthase, and phosphoribosylanthranilate isomerase activities. This Cryptococcus neoformans var. neoformans serotype D (strain JEC21 / ATCC MYA-565) (Filobasidiella neoformans) protein is Multifunctional tryptophan biosynthesis protein (TRP1).